The following is a 325-amino-acid chain: Elongation factor P--(R)-beta-lysine ligase (325 aa).

Position 76 to 78 (76 to 78 (SPE)) interacts with substrate. Residues 100-102 (RNE) and Asn-109 contribute to the ATP site. Tyr-118 provides a ligand contact to substrate. 244–245 (EL) contacts ATP. Substrate is bound at residue Glu-251. Residue Gly-300 participates in ATP binding.

The protein belongs to the class-II aminoacyl-tRNA synthetase family. EpmA subfamily. Homodimer.

The catalysed reaction is D-beta-lysine + L-lysyl-[protein] + ATP = N(6)-((3R)-3,6-diaminohexanoyl)-L-lysyl-[protein] + AMP + diphosphate + H(+). Functionally, with EpmB is involved in the beta-lysylation step of the post-translational modification of translation elongation factor P (EF-P). Catalyzes the ATP-dependent activation of (R)-beta-lysine produced by EpmB, forming a lysyl-adenylate, from which the beta-lysyl moiety is then transferred to the epsilon-amino group of a conserved specific lysine residue in EF-P. The chain is Elongation factor P--(R)-beta-lysine ligase from Edwardsiella ictaluri (strain 93-146).